The following is a 456-amino-acid chain: GTPase Der (456 aa).

2 EngA-type G domains span residues 3-167 (FTIA…PPSD) and 185-360 (IRVA…AVWN). Residues 9–16 (GRPNVGKS), 56–60 (DTAGL), and 119–122 (NKSE) each bind GTP. The interval 162 to 181 (IVPPSDDEDDEREETDEERA) is disordered. The segment covering 166 to 178 (SDDEDDEREETDE) has biased composition (acidic residues). GTP-binding positions include 191-198 (GRPNAGKS), 238-242 (DTAGL), and 303-306 (NKWD). The KH-like domain occupies 361-445 (RRVPTAALNR…PVRITLREKA (85 aa)).

The protein belongs to the TRAFAC class TrmE-Era-EngA-EngB-Septin-like GTPase superfamily. EngA (Der) GTPase family. In terms of assembly, associates with the 50S ribosomal subunit.

In terms of biological role, GTPase that plays an essential role in the late steps of ribosome biogenesis. The polypeptide is GTPase Der (Bradyrhizobium sp. (strain ORS 278)).